The chain runs to 400 residues: Spermatogenic leucine zipper protein 1 (400 aa).

Residues methionine 1–proline 27 form a disordered region. Serine 106 carries the post-translational modification Phosphoserine. Residues arginine 116 to isoleucine 127 are helix-loop-helix motif. A basic motif region spans residues histidine 128–arginine 193. Coiled coils occupy residues serine 182 to valine 231 and leucine 268 to histidine 293. The residue at position 207 (serine 207) is a Phosphoserine. The interval leucine 252 to leucine 273 is leucine-zipper. Residues alanine 295 to lysine 332 form a disordered region.

In terms of assembly, interacts with PPP1CC isoform gamma-2. Post-translationally, phosphorylated by MAPK1/ERK2 and MAPK3/ERK1.

The protein resides in the cytoplasm. Its subcellular location is the nucleus. In terms of biological role, transcription factor that binds to the DNA sequence 5'-CANNTG-3'(E box) and the G-box motif. May play an important role in the regulation of cell proliferation and differentiation during spermatogenesis. The polypeptide is Spermatogenic leucine zipper protein 1 (Spz1) (Rattus norvegicus (Rat)).